The primary structure comprises 490 residues: UDP-N-acetylmuramoyl-L-alanyl-D-glutamate--2,6-diaminopimelate ligase (490 aa).

UDP-N-acetyl-alpha-D-muramoyl-L-alanyl-D-glutamate-binding positions include Leu-22, Ser-24, and 39–41; that span reads HQT. 111-117 contacts ATP; it reads GTNGKTT. UDP-N-acetyl-alpha-D-muramoyl-L-alanyl-D-glutamate-binding positions include Asn-152, 153-154, Ser-180, Gln-186, and Arg-188; that span reads TT. The residue at position 220 (Lys-220) is an N6-carboxylysine. Residues Arg-385, 409-412, Gly-460, and Glu-464 each bind meso-2,6-diaminopimelate; that span reads DNPR. Positions 409-412 match the Meso-diaminopimelate recognition motif motif; it reads DNPR.

This sequence belongs to the MurCDEF family. MurE subfamily. Mg(2+) serves as cofactor. In terms of processing, carboxylation is probably crucial for Mg(2+) binding and, consequently, for the gamma-phosphate positioning of ATP.

It localises to the cytoplasm. It carries out the reaction UDP-N-acetyl-alpha-D-muramoyl-L-alanyl-D-glutamate + meso-2,6-diaminopimelate + ATP = UDP-N-acetyl-alpha-D-muramoyl-L-alanyl-gamma-D-glutamyl-meso-2,6-diaminopimelate + ADP + phosphate + H(+). The protein operates within cell wall biogenesis; peptidoglycan biosynthesis. Functionally, catalyzes the addition of meso-diaminopimelic acid to the nucleotide precursor UDP-N-acetylmuramoyl-L-alanyl-D-glutamate (UMAG) in the biosynthesis of bacterial cell-wall peptidoglycan. The protein is UDP-N-acetylmuramoyl-L-alanyl-D-glutamate--2,6-diaminopimelate ligase of Yersinia pestis.